The sequence spans 524 residues: GMP synthase [glutamine-hydrolyzing] (524 aa).

A Glutamine amidotransferase type-1 domain is found at 5 to 195 (KVIVIDFGGQ…VRGVCGCAGT (191 aa)). Cys82 functions as the Nucleophile in the catalytic mechanism. Residues His169 and Glu171 contribute to the active site. The GMPS ATP-PPase domain maps to 196-389 (WKMDSFVKNT…LGLPDYLVFR (194 aa)). 223 to 229 (SGGVDSS) is a binding site for ATP.

Homodimer.

The catalysed reaction is XMP + L-glutamine + ATP + H2O = GMP + L-glutamate + AMP + diphosphate + 2 H(+). It functions in the pathway purine metabolism; GMP biosynthesis; GMP from XMP (L-Gln route): step 1/1. Catalyzes the synthesis of GMP from XMP. The chain is GMP synthase [glutamine-hydrolyzing] from Agathobacter rectalis (strain ATCC 33656 / DSM 3377 / JCM 17463 / KCTC 5835 / VPI 0990) (Eubacterium rectale).